The sequence spans 715 residues: MPAESGKRFKPSKYVPVSAAAIFLVGATTLFFAFTCPGLSLCVSPAVPIYNAIVFLFVLANFSMATFMDPGIFPRAEEDEDKEDDFRAPLYKTVEIKGIQVRMKWCATCRFYRPPRCSHCSVCDNCVEEFDHHCPWVNNCIGRRNYRYFFLFLLSLTAHIMGVFGFGLLYVLYHMEELSGVRTAVTMAVMCVAGLFFIPVAGLTGFHVVLVARGRTTNEQVTGKFRGGVNPFTNGCCNNVSRVLCSSPAPRYLGRPKKEKTIVIRPPFLRPEVSDGQITVKIMDNGIQGELRRSKSKGSLEVTESQSADAEPPPPPKPDLSRYTGLRTHLTLAANEDSSLLGKDSPPTPTMYKYRPGYSSSSTSAAMPHSSSAKLSRGDSLKEPTSIAESSRHPSYRSEPSLEPESFRSPTFGKSFHFDPLSSGSRSSSLKSAQGTGFELGQLQSIRSEGTTSTSYKSLANQTRNGSLSYDSLLTPSDSPDFESVQAGPEPDPPLGYTSPFLSARLAQQREAERHPRLVPTGPTHREPSPVRYDNLSRHIVASLQEREKLLRQSPPLPGREEEPGLGDSGIQSTPGSGHAPRTSSSSDDSKRSPLVKTPLGRPAAPRFGKPDGLRGRGLGSPEPGPTAPYLGRSMSYSSQKAPAGVSEAEEVALQPLLTPKDEVQLKTAYSKSNGQPKSIGSASPGPGQQPLSSPTRGGVKKVSGVGGTTYEISV.

At 1–13 the chain is on the cytoplasmic side; it reads MPAESGKRFKPSK. A helical membrane pass occupies residues 14-34; that stretch reads YVPVSAAAIFLVGATTLFFAF. The Extracellular segment spans residues 35-38; sequence TCPG. The helical transmembrane segment at 39–59 threads the bilayer; it reads LSLCVSPAVPIYNAIVFLFVL. Topologically, residues 60-148 are cytoplasmic; the sequence is ANFSMATFMD…NCIGRRNYRY (89 aa). Tyr91 is modified (phosphotyrosine). Positions 104-154 constitute a DHHC domain; sequence KWCATCRFYRPPRCSHCSVCDNCVEEFDHHCPWVNNCIGRRNYRYFFLFLL. The S-palmitoyl cysteine intermediate role is filled by Cys134. A helical transmembrane segment spans residues 149 to 169; sequence FFLFLLSLTAHIMGVFGFGLL. Topologically, residues 170–191 are extracellular; sequence YVLYHMEELSGVRTAVTMAVMC. A helical transmembrane segment spans residues 192–212; it reads VAGLFFIPVAGLTGFHVVLVA. At 213–715 the chain is on the cytoplasmic side; that stretch reads RGRTTNEQVT…VGGTTYEISV (503 aa). Residues Ser247, Ser296, and Ser299 each carry the phosphoserine modification. The disordered stretch occupies residues 289–648; that stretch reads GELRRSKSKG…SQKAPAGVSE (360 aa). Residue Thr303 is modified to Phosphothreonine. Ser345 is subject to Phosphoserine. Residues Thr348 and Thr350 each carry the phosphothreonine modification. Residues 359 to 373 are compositionally biased toward low complexity; sequence SSSSTSAAMPHSSSA. Residues Ser380, Ser398, Ser406, and Ser409 each carry the phosphoserine modification. A Phosphothreonine modification is found at Thr411. Phosphoserine occurs at positions 415, 425, 429, and 432. The span at 422-432 shows a compositional bias: low complexity; the sequence is SSGSRSSSLKS. A Phosphothreonine modification is found at Thr436. Residues 442–478 are compositionally biased toward polar residues; the sequence is QLQSIRSEGTTSTSYKSLANQTRNGSLSYDSLLTPSD. Ser529 and Ser554 each carry phosphoserine. Arg617 carries the post-translational modification Omega-N-methylarginine. Ser621 bears the Phosphoserine mark. At Thr659 the chain carries Phosphothreonine. The tract at residues 666–715 is disordered; it reads LKTAYSKSNGQPKSIGSASPGPGQQPLSSPTRGGVKKVSGVGGTTYEISV. Over residues 668 to 679 the composition is skewed to polar residues; the sequence is TAYSKSNGQPKS. The segment covering 681–695 has biased composition (low complexity); sequence GSASPGPGQQPLSSP. Phosphoserine is present on residues Ser684 and Ser694. Position 697 is an omega-N-methylarginine (Arg697).

It belongs to the DHHC palmitoyltransferase family. ERF2/ZDHHC9 subfamily. Post-translationally, phosphorylation regulates association with endocytic proteins and its subcellular localization. Phosphorylation by LYN during fatty acid uptake leads to inactivation of the activity. Autopalmitoylated. Palmitoylation of the C-terminal tail regulates stimulation-dependent plasma membrane motility.

Its subcellular location is the cell membrane. It carries out the reaction L-cysteinyl-[protein] + hexadecanoyl-CoA = S-hexadecanoyl-L-cysteinyl-[protein] + CoA. In terms of biological role, palmitoyltransferase that catalyzes the addition of palmitate onto various protein substrates such as CTNND2, CD36, GSDMD, NLRP3, NOD1, NOD2, STAT3 and S1PR1 thus plays a role in various biological processes including cell adhesion, inflammation, fatty acid uptake, bacterial sensing or cardiac functions. Plays an important role in the regulation of synapse efficacy by mediating palmitoylation of delta-catenin/CTNND2, thereby increasing synaptic delivery and surface stabilization of alpha-amino-3-hydroxy-5-methyl-4-isoxazole propionic acid receptors (AMPARs). Under basal conditions, remains at the synaptic membrane through FYN-mediated phosphorylation that prevents association with endocytic proteins. Neuronal activity enhances the internalization and trafficking of DHHC5 from spines to dendritic shafts where it palmitoylates delta-catenin/CTNND2. Regulates cell adhesion at the plasma membrane by palmitoylating GOLGA7B and DSG2. Plays a role in innate immune response by mediating the palmitoylation of NOD1 and NOD2 and their proper recruitment to the bacterial entry site and phagosomes. Also participates in fatty acid uptake by palmitoylating CD36 and thereby targeting it to the plasma membrane. Upon binding of fatty acids to CD36, gets phosphorylated by LYN leading to inactivation and subsequent CD36 caveolar endocytosis. Controls oligodendrocyte development by catalyzing STAT3 palmitoylation. Acts as a regulator of inflammatory response by mediating palmitoylation of NLRP3 and GSDMD. Palmitoylates NLRP3 to promote inflammasome assembly and activation. Activates pyroptosis by catalyzing palmitoylation of gasdermin-D (GSDMD), thereby promoting membrane translocation and pore formation of GSDMD. This chain is Palmitoyltransferase ZDHHC5 (ZDHHC5), found in Canis lupus familiaris (Dog).